We begin with the raw amino-acid sequence, 494 residues long: Glutamyl-tRNA(Gln) amidotransferase subunit A (494 aa).

Catalysis depends on charge relay system residues Lys-79 and Ser-159. The Acyl-ester intermediate role is filled by Ser-183.

It belongs to the amidase family. GatA subfamily. In terms of assembly, heterotrimer of A, B and C subunits.

The enzyme catalyses L-glutamyl-tRNA(Gln) + L-glutamine + ATP + H2O = L-glutaminyl-tRNA(Gln) + L-glutamate + ADP + phosphate + H(+). Allows the formation of correctly charged Gln-tRNA(Gln) through the transamidation of misacylated Glu-tRNA(Gln) in organisms which lack glutaminyl-tRNA synthetase. The reaction takes place in the presence of glutamine and ATP through an activated gamma-phospho-Glu-tRNA(Gln). This Bartonella tribocorum (strain CIP 105476 / IBS 506) protein is Glutamyl-tRNA(Gln) amidotransferase subunit A.